A 217-amino-acid polypeptide reads, in one-letter code: GTP cyclohydrolase 1 (217 aa).

Positions 109, 112, and 180 each coordinate Zn(2+).

This sequence belongs to the GTP cyclohydrolase I family. In terms of assembly, toroid-shaped homodecamer, composed of two pentamers of five dimers.

The catalysed reaction is GTP + H2O = 7,8-dihydroneopterin 3'-triphosphate + formate + H(+). Its pathway is cofactor biosynthesis; 7,8-dihydroneopterin triphosphate biosynthesis; 7,8-dihydroneopterin triphosphate from GTP: step 1/1. The chain is GTP cyclohydrolase 1 from Vibrio campbellii (strain ATCC BAA-1116).